A 302-amino-acid chain; its full sequence is Sulfate adenylyltransferase subunit 2 (302 aa).

Residues 280–302 (RQGRAIDHDQSGSMELKKRQGYF) form a disordered region.

Belongs to the PAPS reductase family. CysD subfamily. As to quaternary structure, heterodimer composed of CysD, the smaller subunit, and CysN.

The enzyme catalyses sulfate + ATP + H(+) = adenosine 5'-phosphosulfate + diphosphate. The protein operates within sulfur metabolism; hydrogen sulfide biosynthesis; sulfite from sulfate: step 1/3. In terms of biological role, with CysN forms the ATP sulfurylase (ATPS) that catalyzes the adenylation of sulfate producing adenosine 5'-phosphosulfate (APS) and diphosphate, the first enzymatic step in sulfur assimilation pathway. APS synthesis involves the formation of a high-energy phosphoric-sulfuric acid anhydride bond driven by GTP hydrolysis by CysN coupled to ATP hydrolysis by CysD. The polypeptide is Sulfate adenylyltransferase subunit 2 (Vibrio vulnificus (strain CMCP6)).